A 208-amino-acid polypeptide reads, in one-letter code: Peptidyl-prolyl cis-trans isomerase FKBP13, chloroplastic (208 aa).

2 cysteine pairs are disulfide-bonded: C84–C96 and C185–C190. The PPIase FKBP-type domain occupies 109-208 (GQLIKAHYVG…LFDIEYIGKA (100 aa)).

It belongs to the FKBP-type PPIase family. As to quaternary structure, interacts in vitro with LTO1. The precursor, but not the mature form of the protein, interacts with the Rieske protein. As to expression, expressed in stems, leaves and developing flower buds, but not in roots.

It localises to the plastid. The protein localises to the chloroplast thylakoid lumen. The catalysed reaction is [protein]-peptidylproline (omega=180) = [protein]-peptidylproline (omega=0). Its activity is regulated as follows. PPIase activity is optimal in oxidized form (S-S) and minimal in reduced form (SH). Reduction of the oxidized form is mediated by thioredoxin (TRX-M). Functionally, PPIases accelerate the folding of proteins. It catalyzes the cis-trans isomerization of proline imidic peptide bonds in oligopeptides. Responsive of the major PPIase activity in the chloroplast thylakoid lumen. Regulates the accumulation of Rieske protein, an essential component of the photosynthetic electron transport chain. The protein is Peptidyl-prolyl cis-trans isomerase FKBP13, chloroplastic of Arabidopsis thaliana (Mouse-ear cress).